Consider the following 641-residue polypeptide: Epithelial sodium channel subunit beta (641 aa).

Residues 1–50 lie on the Cytoplasmic side of the membrane; that stretch reads MHVKKYLLKGLHRLQKGPGYTYKELLVWYCDNTNTHGPKRIICEGPKKKA. The helical transmembrane segment at 51-71 threads the bilayer; it reads MWFVLTLLFTSLVCWQWGLFI. Residues 72 to 533 lie on the Extracellular side of the membrane; that stretch reads KTYLNWEVSV…GGQFGFWMGG (462 aa). Disulfide bonds link cysteine 98-cysteine 273, cysteine 185-cysteine 190, cysteine 197-cysteine 204, cysteine 250-cysteine 257, cysteine 362-cysteine 449, cysteine 387-cysteine 445, cysteine 391-cysteine 441, cysteine 400-cysteine 427, and cysteine 402-cysteine 416. Asparagine 141 carries an N-linked (GlcNAc...) asparagine glycan. An N-linked (GlcNAc...) asparagine glycan is attached at asparagine 379. The helical transmembrane segment at 534–554 threads the bilayer; sequence SVLCLIEFGEIIIDFVWITII. The Cytoplasmic segment spans residues 555-641; it reads KLVALAKSVR…IESDSEGDAI (87 aa). The interval 597–624 is disordered; sequence TPGPDVEAYPHEQNPPIPGTPPPNYDSL. The span at 609 to 620 shows a compositional bias: pro residues; it reads QNPPIPGTPPPN. The PY motif; recruits WW domain-containing proteins and is thereby required for ubiquitination and inhibition of the channel by NEDD4 and NEDD4L signature appears at 617-621; sequence PPPNY. Residues serine 634 and serine 636 each carry the phosphoserine modification.

This sequence belongs to the amiloride-sensitive sodium channel (TC 1.A.6) family. SCNN1B subfamily. Component of the heterotrimeric epithelial sodium channel (ENaC) composed of an alpha/SCNN1A, a beta/SCNN1B and a gamma/SCNN1G subunit. An additional delta/SCNN1D subunit can replace the alpha/SCNN1A subunit to form an alternative channel with specific properties. Interacts with WWP1 (via WW domains). Interacts with WWP2 (via WW domains); inhibits the channel. Interacts with the full-length immature form of PCSK9 (pro-PCSK9). Interacts (N-glycosylated) with BPIFA1; the interaction is direct and inhibits the proteolytic processing of SCNN1A and SCNN1G and the activation of ENaC. Post-translationally, ubiquitinated. Can be ubiquitinated at multiple sites and undergo monoubiquitination and polyubiquitination. Ubiquitination by NEDD4 or NEDD4L inhibits the ENaC channel through endocytosis, intracellular retention and degradation of its individual subunits. However, some studies could not confirm the ubiquitination of this subunit of the ENaC. Phosphorylated on serine and threonine residues. Aldosterone and insulin increase the basal level of phosphorylation. In terms of processing, N-glycosylated. N-glycosylation is required for interaction with BPIFA1.

It is found in the apical cell membrane. Its subcellular location is the cytoplasmic vesicle membrane. The enzyme catalyses Na(+)(in) = Na(+)(out). Its activity is regulated as follows. Originally identified and characterized by its inhibition by the diuretic drug amiloride. Its function is as follows. This is one of the three pore-forming subunits of the heterotrimeric epithelial sodium channel (ENaC), a critical regulator of sodium balance and fluid homeostasis. ENaC operates in epithelial tissues, where it mediates the electrodiffusion of sodium ions from extracellular fluid through the apical membrane of cells, with water following osmotically. It plays a key role in maintaining sodium homeostasis through electrogenic sodium reabsorption in the kidneys. Additionally, ENaC is essential for airway surface liquid homeostasis, which is crucial for proper mucus clearance. The polypeptide is Epithelial sodium channel subunit beta (Bos taurus (Bovine)).